Reading from the N-terminus, the 287-residue chain is Movement protein BC1 (287 aa).

It belongs to the begomovirus movement protein BC1 family. In terms of assembly, binds to dimeric supercoiled plasmid DNA. Post-translationally, phosphorylated.

The protein localises to the host cell membrane. Its subcellular location is the host microsome membrane. It is found in the host endoplasmic reticulum membrane. Functionally, transports viral genome to neighboring plant cells directly through plasmosdesmata, without any budding. The movement protein allows efficient cell to cell propagation, by bypassing the host cell wall barrier. Begomovirus genome is shuttled out of nucleus by Nuclear shuttle protein (NSP) and the movement protein transports the DNA-NSP complex to cell plasmodesmata and facilitates further movement across the cell wall. The polypeptide is Movement protein BC1 (Manihot esculenta (Cassava)).